Here is a 555-residue protein sequence, read N- to C-terminus: DNA-directed primase/polymerase protein (555 aa).

Positions 1–22 (MKRKWEATLKQIEERASHYERK) form a coiled coil. Substrate-binding positions include Arg76, 114 to 116 (DLE), and 165 to 169 (KFSRH). The Mn(2+) site is built by Asp114 and Glu116. Positions 210-230 (ETTGHEFTHFSETPSEQGTCF) are disordered. A compositionally biased stretch (polar residues) spans 219-230 (FSETPSEQGTCF). Ser255 bears the Phosphoserine mark. Substrate-binding positions include 288–291 (RNFR) and Lys297. Zn(2+)-binding residues include Cys418, His425, Cys445, and Cys450. The short motif at 418–451 (CENIGRAHRSNNIMILVDLKNEVWYQKCHDPVCK) is the Zinc knuckle motif element. The disordered stretch occupies residues 480–503 (TDTTADTETKSPHGPSSSVLSKGA). Positions 480–555 (TDTTADTETK…DELLIEVLQE (76 aa)) are interaction with RPA1. 2 consecutive short sequence motifs (RPA1-binding motif) follow at residues 509 to 523 (WDNG…EATE) and 543 to 551 (EIPDELLIE).

This sequence belongs to the eukaryotic-type primase small subunit family. Interacts with RPA1; leading to recruitment to chromatin and stimulate DNA primase activity. Interacts with SSBP1. Interacts with POLDIP2; leading to enhance DNA polymerase activity. The cofactor is Mn(2+).

The protein localises to the nucleus. It localises to the mitochondrion matrix. It is found in the chromosome. The enzyme catalyses ssDNA + n NTP = ssDNA/pppN(pN)n-1 hybrid + (n-1) diphosphate.. It carries out the reaction DNA(n) + a 2'-deoxyribonucleoside 5'-triphosphate = DNA(n+1) + diphosphate. In terms of biological role, DNA primase and DNA polymerase required to tolerate replication-stalling lesions by bypassing them. Required to facilitate mitochondrial and nuclear replication fork progression by initiating de novo DNA synthesis using dNTPs and acting as an error-prone DNA polymerase able to bypass certain DNA lesions. Shows a high capacity to tolerate DNA damage lesions such as 8oxoG and abasic sites in DNA. Provides different translesion synthesis alternatives when DNA replication is stalled: able to synthesize DNA primers downstream of lesions, such as ultraviolet (UV) lesions, R-loops and G-quadruplexes, to allow DNA replication to continue. Can also realign primers ahead of 'unreadable lesions' such as abasic sites and 6-4 photoproduct (6-4 pyrimidine-pyrimidinone), thereby skipping the lesion. Repriming avoids fork degradation while leading to accumulation of internal ssDNA gaps behind the forks. Also able to incorporate nucleotides opposite DNA lesions such as 8oxoG, like a regular translesion synthesis DNA polymerase. Also required for reinitiating stalled forks after UV damage during nuclear DNA replication. Required for mitochondrial DNA (mtDNA) synthesis and replication, by reinitiating synthesis after UV damage or in the presence of chain-terminating nucleotides. Prevents APOBEC family-mediated DNA mutagenesis by repriming downstream of abasic site to prohibit error-prone translesion synthesis. Has non-overlapping function with POLH. In addition to its role in DNA damage response, also required to maintain efficient nuclear and mitochondrial DNA replication in unperturbed cells. This Bos taurus (Bovine) protein is DNA-directed primase/polymerase protein.